Here is a 362-residue protein sequence, read N- to C-terminus: Alpha-tubulin N-acetyltransferase (362 aa).

One can recognise an N-acetyltransferase domain in the interval 1–177; it reads MQFGCNVAEA…NNFLMLDASI (177 aa). Residues 111–124 and 147–156 each bind acetyl-CoA; these read FYTH…GIGT and SPKLLAFLSK.

It belongs to the acetyltransferase ATAT1 family.

The enzyme catalyses L-lysyl-[alpha-tubulin] + acetyl-CoA = N(6)-acetyl-L-lysyl-[alpha-tubulin] + CoA + H(+). Its function is as follows. Specifically acetylates 'Lys-40' in alpha-tubulin on the lumenal side of microtubules. Promotes microtubule destabilization and accelerates microtubule dynamics; this activity may be independent of acetylation activity. Acetylates alpha-tubulin with a slow enzymatic rate, due to a catalytic site that is not optimized for acetyl transfer. Enters the microtubule through each end and diffuses quickly throughout the lumen of microtubules. Acetylates only long/old microtubules because of its slow acetylation rate since it does not have time to act on dynamically unstable microtubules before the enzyme is released. In Giardia intestinalis (strain ATCC 50803 / WB clone C6) (Giardia lamblia), this protein is Alpha-tubulin N-acetyltransferase.